A 433-amino-acid chain; its full sequence is Adenosylhomocysteinase B (433 aa).

T57, D132, E157, K187, and D191 together coordinate substrate. Residues 184 to 351 are NAD binding; it reads SVTKSKFDNL…EGRLVNLGCA (168 aa).

Belongs to the adenosylhomocysteinase family. In terms of assembly, homotetramer. The cofactor is NAD(+).

It is found in the cytoplasm. It carries out the reaction S-adenosyl-L-homocysteine + H2O = L-homocysteine + adenosine. It participates in amino-acid biosynthesis; L-homocysteine biosynthesis; L-homocysteine from S-adenosyl-L-homocysteine: step 1/1. Catalyzes the hydrolysis of S-adenosyl-L-homocysteine to form adenosine and homocysteine. Binds copper ions. The polypeptide is Adenosylhomocysteinase B (ahcy-b) (Xenopus laevis (African clawed frog)).